Here is a 155-residue protein sequence, read N- to C-terminus: Small ribosomal subunit protein uS7c (155 aa).

Belongs to the universal ribosomal protein uS7 family. As to quaternary structure, part of the 30S ribosomal subunit.

It localises to the plastid. Its subcellular location is the chloroplast. One of the primary rRNA binding proteins, it binds directly to 16S rRNA where it nucleates assembly of the head domain of the 30S subunit. This is Small ribosomal subunit protein uS7c (rps7) from Cedrus deodara (Deodar cedar).